Here is a 224-residue protein sequence, read N- to C-terminus: Vacuolar protein-sorting-associated protein 24 (224 aa).

Residue Lys203 forms a Glycyl lysine isopeptide (Lys-Gly) (interchain with G-Cter in ubiquitin) linkage.

The protein belongs to the SNF7 family. In terms of assembly, core component of the ESCRT-III complex (endosomal sorting required for transport complex III). ESCRT-III appears to be sequentially assembled as a flat lattice on the endosome membrane and forms a transient 450 kDa complex that contains DID4, oligomerized SNF7, VPS20 and VPS24. SNF7 oligomerization into a membrane-associated filament is nucleated by association of SNF7 with VPS20; the process is terminated through association of VPS24, possibly by capping the SNF7 filament. VPS24 subsequently associates with DID4/VPS2. Interacts with the VPS4. Interacts with DID2.

Its subcellular location is the endosome membrane. It is found in the endomembrane system. Functionally, class E VPS protein implicated in concentration and sorting of cargo proteins of the multivesicular body (MVB) for incorporation into intralumenal vesicles. The lumenal sequestrated membrane proteins will be targeted into the vacuole after fusion of the endosome with the vacuole. Acts a component of the ESCRT-III complex, which appears to be critical for late steps in MVB sorting, such as membrane invagination and final cargo sorting and recruitment oflate-acting components of the sorting machinery. The MVB pathway requires the sequential function of ESCRT-O, -I,-II and -III complex assemblies. The DID4/VPS2-VPS24 subcomplex is required for the VPS4-dependent dissociation of ESCRT-III. The sequence is that of Vacuolar protein-sorting-associated protein 24 (VPS24) from Saccharomyces cerevisiae (strain ATCC 204508 / S288c) (Baker's yeast).